A 662-amino-acid polypeptide reads, in one-letter code: Bifunctional polymyxin resistance protein ArnA (662 aa).

A formyltransferase ArnAFT region spans residues 1 to 307; sequence MTSKAVVFAY…ELGLVEGARL (307 aa). The Proton donor; for formyltransferase activity role is filled by His-106. (6R)-10-formyltetrahydrofolate contacts are provided by residues Arg-116 and 138-142; that span reads VERAD. Residues 316–662 form a dehydrogenase ArnADH region; it reads RRTRVLILGV…EALREREAQA (347 aa). Residues Asp-349 and 370–371 each bind NAD(+); that span reads DI. UDP-alpha-D-glucuronate-binding positions include Ala-395, Tyr-400, and 434–435; that span reads TS. Glu-436 (proton acceptor; for decarboxylase activity) is an active-site residue. UDP-alpha-D-glucuronate contacts are provided by residues Arg-462, Asn-493, 527–536, and Tyr-614; that span reads RLVDGGAQKR. Residue Arg-620 is the Proton donor; for decarboxylase activity of the active site.

It in the N-terminal section; belongs to the Fmt family. UDP-L-Ara4N formyltransferase subfamily. The protein in the C-terminal section; belongs to the NAD(P)-dependent epimerase/dehydratase family. UDP-glucuronic acid decarboxylase subfamily. As to quaternary structure, homohexamer, formed by a dimer of trimers.

The catalysed reaction is UDP-alpha-D-glucuronate + NAD(+) = UDP-beta-L-threo-pentopyranos-4-ulose + CO2 + NADH. It carries out the reaction UDP-4-amino-4-deoxy-beta-L-arabinose + (6R)-10-formyltetrahydrofolate = UDP-4-deoxy-4-formamido-beta-L-arabinose + (6S)-5,6,7,8-tetrahydrofolate + H(+). The protein operates within nucleotide-sugar biosynthesis; UDP-4-deoxy-4-formamido-beta-L-arabinose biosynthesis; UDP-4-deoxy-4-formamido-beta-L-arabinose from UDP-alpha-D-glucuronate: step 1/3. Its pathway is nucleotide-sugar biosynthesis; UDP-4-deoxy-4-formamido-beta-L-arabinose biosynthesis; UDP-4-deoxy-4-formamido-beta-L-arabinose from UDP-alpha-D-glucuronate: step 3/3. It participates in bacterial outer membrane biogenesis; lipopolysaccharide biosynthesis. Bifunctional enzyme that catalyzes the oxidative decarboxylation of UDP-glucuronic acid (UDP-GlcUA) to UDP-4-keto-arabinose (UDP-Ara4O) and the addition of a formyl group to UDP-4-amino-4-deoxy-L-arabinose (UDP-L-Ara4N) to form UDP-L-4-formamido-arabinose (UDP-L-Ara4FN). The modified arabinose is attached to lipid A and is required for resistance to polymyxin and cationic antimicrobial peptides. This is Bifunctional polymyxin resistance protein ArnA from Pseudomonas paraeruginosa (strain DSM 24068 / PA7) (Pseudomonas aeruginosa (strain PA7)).